The primary structure comprises 392 residues: Lipid-A-disaccharide synthase (392 aa).

The protein belongs to the LpxB family.

The catalysed reaction is a lipid X + a UDP-2-N,3-O-bis[(3R)-3-hydroxyacyl]-alpha-D-glucosamine = a lipid A disaccharide + UDP + H(+). Its pathway is bacterial outer membrane biogenesis; LPS lipid A biosynthesis. Functionally, condensation of UDP-2,3-diacylglucosamine and 2,3-diacylglucosamine-1-phosphate to form lipid A disaccharide, a precursor of lipid A, a phosphorylated glycolipid that anchors the lipopolysaccharide to the outer membrane of the cell. The sequence is that of Lipid-A-disaccharide synthase from Prochlorococcus marinus (strain MIT 9313).